A 103-amino-acid polypeptide reads, in one-letter code: Large ribosomal subunit protein bL21 (103 aa).

The protein belongs to the bacterial ribosomal protein bL21 family. In terms of assembly, part of the 50S ribosomal subunit. Contacts protein L20.

In terms of biological role, this protein binds to 23S rRNA in the presence of protein L20. This is Large ribosomal subunit protein bL21 from Pseudomonas paraeruginosa (strain DSM 24068 / PA7) (Pseudomonas aeruginosa (strain PA7)).